A 544-amino-acid polypeptide reads, in one-letter code: CTP synthase (544 aa).

The tract at residues 1–265 (MARFIFITGG…DEAVLSAFGI (265 aa)) is amidoligase domain. Serine 13 lines the CTP pocket. Serine 13 contacts UTP. 14–19 (SLGKGL) is a binding site for ATP. Tyrosine 54 contacts L-glutamine. Aspartate 71 is a binding site for ATP. Residues aspartate 71 and glutamate 139 each coordinate Mg(2+). CTP contacts are provided by residues 146–148 (DIE), 186–191 (KTKPTQ), and lysine 222. UTP contacts are provided by residues 186 to 191 (KTKPTQ) and lysine 222. The region spanning 291–543 (TIGVVGKYVG…IAAALQQSRL (253 aa)) is the Glutamine amidotransferase type-1 domain. Glycine 355 contributes to the L-glutamine binding site. The active-site Nucleophile; for glutamine hydrolysis is cysteine 382. L-glutamine contacts are provided by residues 383–386 (LGMQ), glutamate 406, and arginine 471. Active-site residues include histidine 516 and glutamate 518.

Belongs to the CTP synthase family. In terms of assembly, homotetramer.

The enzyme catalyses UTP + L-glutamine + ATP + H2O = CTP + L-glutamate + ADP + phosphate + 2 H(+). The catalysed reaction is L-glutamine + H2O = L-glutamate + NH4(+). It catalyses the reaction UTP + NH4(+) + ATP = CTP + ADP + phosphate + 2 H(+). It participates in pyrimidine metabolism; CTP biosynthesis via de novo pathway; CTP from UDP: step 2/2. Its activity is regulated as follows. Allosterically activated by GTP, when glutamine is the substrate; GTP has no effect on the reaction when ammonia is the substrate. The allosteric effector GTP functions by stabilizing the protein conformation that binds the tetrahedral intermediate(s) formed during glutamine hydrolysis. Inhibited by the product CTP, via allosteric rather than competitive inhibition. Functionally, catalyzes the ATP-dependent amination of UTP to CTP with either L-glutamine or ammonia as the source of nitrogen. Regulates intracellular CTP levels through interactions with the four ribonucleotide triphosphates. The protein is CTP synthase of Rhizorhabdus wittichii (strain DSM 6014 / CCUG 31198 / JCM 15750 / NBRC 105917 / EY 4224 / RW1) (Sphingomonas wittichii).